A 193-amino-acid polypeptide reads, in one-letter code: Holliday junction branch migration complex subunit RuvA (193 aa).

The tract at residues 1-64 (MIGRIAGILL…EDAHLLYGFL (64 aa)) is domain I. The domain II stretch occupies residues 65-139 (TPQERTTFRE…GKLGADLGAL (75 aa)). Positions 139–143 (LAGAA) are flexible linker. A domain III region spans residues 144–193 (SASDHATDILNALLALGYSEKEGLAAIKNVPAGTGVSEGIKLALKALSKA).

Belongs to the RuvA family. Homotetramer. Forms an RuvA(8)-RuvB(12)-Holliday junction (HJ) complex. HJ DNA is sandwiched between 2 RuvA tetramers; dsDNA enters through RuvA and exits via RuvB. An RuvB hexamer assembles on each DNA strand where it exits the tetramer. Each RuvB hexamer is contacted by two RuvA subunits (via domain III) on 2 adjacent RuvB subunits; this complex drives branch migration. In the full resolvosome a probable DNA-RuvA(4)-RuvB(12)-RuvC(2) complex forms which resolves the HJ.

It localises to the cytoplasm. The RuvA-RuvB-RuvC complex processes Holliday junction (HJ) DNA during genetic recombination and DNA repair, while the RuvA-RuvB complex plays an important role in the rescue of blocked DNA replication forks via replication fork reversal (RFR). RuvA specifically binds to HJ cruciform DNA, conferring on it an open structure. The RuvB hexamer acts as an ATP-dependent pump, pulling dsDNA into and through the RuvAB complex. HJ branch migration allows RuvC to scan DNA until it finds its consensus sequence, where it cleaves and resolves the cruciform DNA. The sequence is that of Holliday junction branch migration complex subunit RuvA from Burkholderia cenocepacia (strain HI2424).